The sequence spans 180 residues: Large ribosomal subunit protein uL6 (180 aa).

Belongs to the universal ribosomal protein uL6 family. In terms of assembly, part of the 50S ribosomal subunit.

Its function is as follows. This protein binds to the 23S rRNA, and is important in its secondary structure. It is located near the subunit interface in the base of the L7/L12 stalk, and near the tRNA binding site of the peptidyltransferase center. The polypeptide is Large ribosomal subunit protein uL6 (Flavobacterium johnsoniae (strain ATCC 17061 / DSM 2064 / JCM 8514 / BCRC 14874 / CCUG 350202 / NBRC 14942 / NCIMB 11054 / UW101) (Cytophaga johnsonae)).